A 691-amino-acid polypeptide reads, in one-letter code: Proprotein convertase subtilisin/kexin type 9 (691 aa).

An N-terminal signal peptide occupies residues 1–29 (MGTVSSRRLWWPLPLLLLLLLLGPAGARA). A propeptide spanning residues 30-151 (QEDDDGDYEE…IEEDSSVFAQ (122 aa)) is cleaved from the precursor. The residue at position 37 (tyrosine 37) is a Sulfotyrosine. At serine 46 the chain carries Phosphoserine. The 73-residue stretch at 76-148 (TYVVVLKEET…VDYIEEDSSV (73 aa)) folds into the Inhibitor I9 domain. The region spanning 154–460 (PWNLERITPA…GWQLFCRTVW (307 aa)) is the Peptidase S8 domain. Active-site charge relay system residues include aspartate 185 and histidine 225. Cystine bridges form between cysteine 222-cysteine 254 and cysteine 322-cysteine 357. Residue serine 385 is the Charge relay system of the active site. The interval 449-691 (GAGWQLFCRT…HLAQASQELQ (243 aa)) is C-terminal domain. 3 disulfides stabilise this stretch: cysteine 456/cysteine 526, cysteine 476/cysteine 525, and cysteine 485/cysteine 508. Asparagine 532 carries N-linked (GlcNAc...) asparagine glycosylation. 6 disulfide bridges follow: cysteine 533-cysteine 600, cysteine 551-cysteine 599, cysteine 561-cysteine 587, cysteine 607-cysteine 678, cysteine 625-cysteine 677, and cysteine 634-cysteine 653. Position 687 is a phosphoserine (serine 687).

Belongs to the peptidase S8 family. As to quaternary structure, monomer. Can self-associate to form dimers and higher multimers which may have increased LDLR degrading activity. The precursor protein but not the mature protein may form multimers. Interacts with APOB, VLDLR, LRP8/APOER2 and BACE1. The full-length immature form (pro-PCSK9) interacts with SCNN1A, SCNN1B and SCNN1G. The pro-PCSK9 form (via C-terminal domain) interacts with LDLR. Interacts (via the C-terminal domain) with ANXA2 (via repeat Annexin 1); the interaction inhibits the degradation of LDLR. The cofactor is Ca(2+). Cleavage by furin and PCSK5 generates a truncated inactive protein that is unable to induce LDLR degradation. Post-translationally, undergoes autocatalytic cleavage in the endoplasmic reticulum to release the propeptide from the N-terminus and the cleavage of the propeptide is strictly required for its maturation and activation. The cleaved propeptide however remains associated with the catalytic domain through non-covalent interactions, preventing potential substrates from accessing its active site. As a result, it is secreted from cells as a propeptide-containing, enzymatically inactive protein. In terms of processing, phosphorylation protects the propeptide against proteolysis.

The protein localises to the cytoplasm. The protein resides in the secreted. Its subcellular location is the endosome. It localises to the lysosome. It is found in the cell surface. The protein localises to the endoplasmic reticulum. The protein resides in the golgi apparatus. Its proteolytic activity is autoinhibited by the non-covalent binding of the propeptide to the catalytic domain. Inhibited by EGTA. Its function is as follows. Crucial player in the regulation of plasma cholesterol homeostasis. Binds to low-density lipid receptor family members: low density lipoprotein receptor (LDLR), very low density lipoprotein receptor (VLDLR), apolipoprotein E receptor (LRP1/APOER) and apolipoprotein receptor 2 (LRP8/APOER2), and promotes their degradation in intracellular acidic compartments. Acts via a non-proteolytic mechanism to enhance the degradation of the hepatic LDLR through a clathrin LDLRAP1/ARH-mediated pathway. May prevent the recycling of LDLR from endosomes to the cell surface or direct it to lysosomes for degradation. Can induce ubiquitination of LDLR leading to its subsequent degradation. Inhibits intracellular degradation of APOB via the autophagosome/lysosome pathway in a LDLR-independent manner. Involved in the disposal of non-acetylated intermediates of BACE1 in the early secretory pathway. Inhibits epithelial Na(+) channel (ENaC)-mediated Na(+) absorption by reducing ENaC surface expression primarily by increasing its proteasomal degradation. Regulates neuronal apoptosis via modulation of LRP8/APOER2 levels and related anti-apoptotic signaling pathways. This chain is Proprotein convertase subtilisin/kexin type 9 (PCSK9), found in Saimiri boliviensis boliviensis (Bolivian squirrel monkey).